A 336-amino-acid chain; its full sequence is Protein-glutamate methylesterase/protein-glutamine glutaminase 3 (336 aa).

One can recognise a Response regulatory domain in the interval 2-119 (KIAIVNDMPM…PNPKEAAAPL (118 aa)). 4-aspartylphosphate is present on aspartate 53. Residues 147–336 (PARRDRLVAI…APRLVEVFTQ (190 aa)) enclose the CheB-type methylesterase domain. Active-site residues include serine 159, histidine 186, and aspartate 279.

It belongs to the CheB family. Post-translationally, phosphorylated by CheA. Phosphorylation of the N-terminal regulatory domain activates the methylesterase activity.

It localises to the cytoplasm. It carries out the reaction [protein]-L-glutamate 5-O-methyl ester + H2O = L-glutamyl-[protein] + methanol + H(+). It catalyses the reaction L-glutaminyl-[protein] + H2O = L-glutamyl-[protein] + NH4(+). Involved in chemotaxis. Part of a chemotaxis signal transduction system that modulates chemotaxis in response to various stimuli. Catalyzes the demethylation of specific methylglutamate residues introduced into the chemoreceptors (methyl-accepting chemotaxis proteins or MCP) by CheR. Also mediates the irreversible deamidation of specific glutamine residues to glutamic acid. This Pseudomonas savastanoi pv. phaseolicola (strain 1448A / Race 6) (Pseudomonas syringae pv. phaseolicola (strain 1448A / Race 6)) protein is Protein-glutamate methylesterase/protein-glutamine glutaminase 3.